The chain runs to 185 residues: Ubiquitin-conjugating enzyme E2 2 (185 aa).

The 147-residue stretch at 4–150 folds into the UBC core domain; that stretch reads PSKKRLIRDF…VKATVEASWL (147 aa). The active-site Glycyl thioester intermediate is Cys-88. Acidic residues predominate over residues 149–173; it reads WLDDGEMPESIEEDDEAEAEAEAEA. The interval 149 to 185 is disordered; it reads WLDDGEMPESIEEDDEAEAEAEAEATVDRSAPQTASA.

It belongs to the ubiquitin-conjugating enzyme family.

The protein localises to the cytoplasm. Its subcellular location is the nucleus. The enzyme catalyses S-ubiquitinyl-[E1 ubiquitin-activating enzyme]-L-cysteine + [E2 ubiquitin-conjugating enzyme]-L-cysteine = [E1 ubiquitin-activating enzyme]-L-cysteine + S-ubiquitinyl-[E2 ubiquitin-conjugating enzyme]-L-cysteine.. The protein operates within protein modification; protein ubiquitination. Functionally, catalyzes the covalent attachment of ubiquitin to other proteins. Plays a role in transcription regulation by catalyzing the monoubiquitination of histone H2B to form H2BK123ub1. H2BK123ub1 gives a specific tag for epigenetic transcriptional activation and is also a prerequisite for H3K4me and H3K79me formation. Also involved in postreplication repair of UV-damaged DNA, in N-end rule-dependent protein degradation and in sporulation. This Mycosarcoma maydis (Corn smut fungus) protein is Ubiquitin-conjugating enzyme E2 2 (UBC2).